A 3078-amino-acid polypeptide reads, in one-letter code: MKRGRRKVDGDGNCPSNGMASSQRNDNSNKNIVRKIYVIEDDNTDSEDKKICKNRRLDLHNSSSRESKDMKLSEEPRHINEKCINDNNKINNNNPEKDIIDLSDSSNDMKHKNNNNNNNNKSHTKNNIFFQTNNPDTSYKIKKDSTTKQENTSSSLHDVSINDNHNEVNNENVLVGGNDSINNGNYINKKTNNLQNVKNTTNSKRKKYNSNNTMPTKKYNNTHQDNNITENREKENTSSIYDNTCNKNNTVHISRGKKNKSSISIHPMRLRNSTVSNCKKENSQGDEEKENENNIPNKRQTRNIGKINVHIEKEERGNQENIQQNDSVINNNIIENKTDDKKPNIANKKSIQKRTNKRMNVETFDICAEQNGNSKKNNSTLVNTNPNDLYDDINVKTDCDWKKYYLSNVISFLNCKYVDLNNYLLSMKYKSVKNIDILDYIHTKYYDNLKYIYFDLHLEKNSSKISSGDLYVILNPILNVTYYSKMIDYCMSCIPSNCRRRITRKRFFNSNATLTDNSNINSIRTDNWYTTHYRNIHESEIFDYQWSIPTEPKGSFYRTVNAYRINRYFMYRNTLVARTINLNATNNVSVFYTINKISYEYNIKISFDNFWNIADPENNYVYYYYFDFDTNQYYTYKITKIGRSGNSNLIKEFLIKMKPTFWCLQDIIIYSSLIFHSTYMRYEKMIHFVTFHDYLQLFVQEHLKQFLELFDALQEPIPKKFLRKIKIYRRLEFSLIFTLCETRKKLHAYSSITRRIDSFLSDYAFFSESQKFRFIYHFYSVRLLGVSPSDLYMKTNKFLSMYDAYVRKNERNADRIPIMFNKFGILLEALIYKCIQYDIINTDIRNNKNEAKNTQNVGNDGNAANFVKSGNVKNAANFVKSGNVKNASNFVKSGNVKNAANFVKSGNVKNASNFVKSGNVKNAANFVKSGNVKNAANFVKSENVGNSRNAEIHESNSPNHNGDKNVDPSDNVTGTKQDENETKNVMQISNILSNCILSEIISNMETMKFPNKYYPWDNKNVFEPFLELLCICKDLSCTNTMCYRSLIRYINVFIQNTILRIFVLRNYKFIDKTRIDYFKIHMLLKLICTFTPCYNSRIVKISCFFMIFIIMNKKINRYKQDYTTDWDNPDFEKLKEKYYPSSDPKKEGLSKPNHMYGVPIEVLRFFIPHYKQCRPEDFIYCPGYKPYENDYYNVDGTVRIIRDHMRYSFYVENICSKKMRHKRRNISAFNKILYKNFKSIKKQFTMFHRPNMLNLSYDWDSFQKDIMVLVNQILTSYEWHGHGAFESFVSIWRFKKRYSKSYTSTKSVEENFRNIEEDLADLDEDSTENINEPNHLDGQNNKNNRKTNNDNTLKQNHRKSRGTSVQGRKNKINRGSKGKHNSINIPKDRKTNIMSQINKFIFNKKDIKIKCEESSSSNYEEGNSSSNEENNISTDKNISNTNNKNGVSLYDNSKVYLKGDYKFSKQFHKYIHKNLLDNVDKTDRTINIISKFFGGVNKSNNVNNINSVNKENNMNKVNAVHKINAVDKVNAVNKVNSVNKLNVVNKTNVLSKLNAVYKVNSVHKMNAVNKVNAVNKVNAVNKVNVVNKKDILNKLNALYKMNAVYKMNALNKVSAVNKVSAVNKMGAVNKVCAVNRVNGVNKVNEVNEVNEVNMVNEVNELNEVNNVNAVNEVNSVNEVNEMNEVNKVNELNEVNEVNNVNEVNNVNEMNNVNEMNNMNEMNNVNVVNEVNNVNEVNNVNEMNNVNEMNNMNEMNNVNVVNEVNNVNEMNNTNELNEVNEVNNVNEVNDVNVVNEVNNVNEMNNMNELNEVNGVNEVHNTNEINEMNNVNVVNEVNNVNEMNNMNELNEVNEVNNVNEVNDVNVVNEVNNVNEMNNMNELNEVNEVNNTNEIHEMNNINEVNNTNEVNNTNEIYEMNNMNDVNNTNEINVVNAVNEVNKVNDSNNSNDANEGNNANYSNDSSNTNNNTSSSTNNSNNNTSCSSQNTTTSSENNDSLENKRNEEDEDEEDDQKDTQKEKNNLEQEDMSPYEDRNKNDEKNINEQDKFHLSNDLGKIYDTYNQGDEVVVSKNKDKLEKHLNDYKSYYYLSKATLMDKIGESQNNNNYNVCNSNELGTNESIKTNSDQNDNVKEKNDSNIFMNNDNYNSSYDNVHNDNDNNMVFKDSSRQDNMEKQKSGENKQYLNNFDNNGNDNDNDNDDNNDNDNNNNNNMNNQYNYQENNINTNYNILYTPSNCQIQNNSYMNTNEMYQPLYNTYPSNAIQENSTINNNIINVSPYMNNDNTTNNTFISGMNSNLSSNISNINNNTYSYDLYSSMNNSYLNNDIQIGNNDINSNTLTNNIVINNYVGNHHMQDSYVTQNTEYTNQISSQTCPNLQYYTHFPNHITNNNYYNVQSGINEVQTQSMSQENNVSHSNEEYMNNNAPNNNVNVYNTYEYNNNQNNKNENINDTNFLNGSSWNNNMINISNVQNSENNEIYCDNIQPNVDNSNRNQNYGISIENNNITDNNLNGSNRTTGNNTYFNNNFMYNSQNDIFAGQGNKTLLDNSNIITTGITSNEYVPNTNYVINNMNNNVYNSLESNYIGNMNNAMNQIGMNSNNVAYMNDNNLSNNNNDNNNDYDNDNNNNNNYSYDNKNDDNILNGINQKESNNVCGTLMSDSDMQRITSNVDFYNNNSSSLYTTAVSGLEFNNNNSNNLYFNNNSITGCNILNNNVENNNKITISNNMIQNEISNETNNNNSFNSMNQNNNFTNFMNINNYHGNTTLLPPQQNIQNNDVHPSNSYGNINMMNNNNSLYSNNSNYYVNSITNDVNYSMINNFNSFHNNTTEYMVPQTTYNNSLGDNGTRTTTYPNVGLNNLNVYQNMYNENNMNNTNNNIFQEYPNNIMPPYNLSNNIGHNSYSYTAYNYTNVVSNLNNNIDISTNIVDTNFNISNSNNYNVEEQTQEIVVEYNNNTDTNFNISQQNNNNNNDNINNINNMNNNNDNNNNSQKNNLSEVQVSNINTPSSYNISARRRRRIGNNGPPSAEELNRLLNIQHLTIPEIATIYGVHRTTIARWCNIRNITSNSMNNSPGKRRKNEDNK.

10 disordered regions span residues 1–29 (MKRG…DNSN), 59–164 (LHNS…INDN), 203–306 (SKRK…NIGK), 949–980 (NAEI…QDEN), 1323–1390 (DEDS…KDRK), 1415–1445 (SSSN…NNKN), 1939–2046 (KVND…QDKF), 2115–2216 (TNES…QYNY), 2599–2637 (AYMN…DDNI), and 2959–3019 (QQNN…NNGP). Residues 14–29 (CPSNGMASSQRNDNSN) are compositionally biased toward polar residues. Over residues 59–84 (LHNSSSRESKDMKLSEEPRHINEKCI) the composition is skewed to basic and acidic residues. Composition is skewed to low complexity over residues 85-94 (NDNNKINNNN) and 114-127 (NNNN…TKNN). 5 stretches are compositionally biased toward polar residues: residues 128-137 (IFFQTNNPDT), 148-157 (KQENTSSSLH), 209-229 (NSNN…NNIT), 237-252 (TSSI…NTVH), and 949-960 (NAEIHESNSPNH). Over residues 1368 to 1380 (RKNKINRGSKGKH) the composition is skewed to basic residues. Over residues 1415-1433 (SSSNYEEGNSSSNEENNIS) the composition is skewed to low complexity. The span at 1434–1445 (TDKNISNTNNKN) shows a compositional bias: polar residues. The span at 1939 to 1993 (KVNDSNNSNDANEGNNANYSNDSSNTNNNTSSSTNNSNNNTSCSSQNTTTSSENN) shows a compositional bias: low complexity. Composition is skewed to basic and acidic residues over residues 2012–2021 (KDTQKEKNNL) and 2029–2046 (YEDR…QDKF). The segment covering 2115–2126 (TNESIKTNSDQN) has biased composition (polar residues). The segment covering 2139–2160 (MNNDNYNSSYDNVHNDNDNNMV) has biased composition (low complexity). A compositionally biased stretch (basic and acidic residues) spans 2163–2177 (DSSRQDNMEKQKSGE). The segment covering 2192–2201 (NDNDNDDNND) has biased composition (acidic residues). 3 stretches are compositionally biased toward low complexity: residues 2202–2216 (NDNN…QYNY), 2602–2630 (NDNN…YSYD), and 2959–2989 (QQNN…QKNN). Residues 2990–3006 (LSEVQVSNINTPSSYNI) are compositionally biased toward polar residues. The DNA-binding stretch occupies residues 2991–3078 (SEVQVSNINT…GKRRKNEDNK (88 aa)).

Homodimer.

It localises to the nucleus. The protein localises to the chromosome. Transcriptional regulator which binds to the DNA motifs 5'-GTGCACAC-3' (motif A) and 5'-[GTA]TGTA[CT][GA]TAC-3' (motif B) of genes essential for early gametocyte development, including those critical for the expansion of the inner membrane complex (IMC). The protein is Homeobox-like protein HDP1 of Plasmodium falciparum (isolate NF54).